A 371-amino-acid polypeptide reads, in one-letter code: Chitin deacetylase (371 aa).

Positions 1–20 (MLCRLFTLFITAALACCVAA) are cleaved as a signal peptide. Residues 73–112 (PKPEPEPTAVPTMAPEPTTVPPTEPSGTYPPETTPTVEPT) are disordered. 2 stretches are compositionally biased toward low complexity: residues 79-89 (PTAVPTMAPEP) and 102-112 (PPETTPTVEPT). A disulfide bridge connects residues Cys-164 and Cys-358. N-linked (GlcNAc...) asparagine glycosylation occurs at Asn-167. Residues 168 to 353 (GTIALTFDDG…EIKKRGLRAV (186 aa)) form the NodB homology domain. Residue Asp-175 is the Proton acceptor of the active site. Residue Asp-175 coordinates acetate. The Co(2+) site is built by Asp-176, His-228, and His-232. The N-linked (GlcNAc...) asparagine glycan is linked to Asn-239. Tyr-270 provides a ligand contact to acetate. His-327 (proton donor) is an active-site residue.

This sequence belongs to the polysaccharide deacetylase family. The cofactor is Co(2+).

The enzyme catalyses [(1-&gt;4)-N-acetyl-beta-D-glucosaminyl](n) + n H2O = chitosan + n acetate. Its function is as follows. Hydrolyzes the N-acetamido groups of N-acetyl-D-glucosamine residues in chitin to form chitosan and acetate. This is Chitin deacetylase from Arthroderma benhamiae (strain ATCC MYA-4681 / CBS 112371) (Trichophyton mentagrophytes).